The following is a 470-amino-acid chain: ATP synthase subunit beta (470 aa).

An ATP-binding site is contributed by 156 to 163 (GGAGVGKT).

This sequence belongs to the ATPase alpha/beta chains family. In terms of assembly, F-type ATPases have 2 components, CF(1) - the catalytic core - and CF(0) - the membrane proton channel. CF(1) has five subunits: alpha(3), beta(3), gamma(1), delta(1), epsilon(1). CF(0) has three main subunits: a(1), b(2) and c(9-12). The alpha and beta chains form an alternating ring which encloses part of the gamma chain. CF(1) is attached to CF(0) by a central stalk formed by the gamma and epsilon chains, while a peripheral stalk is formed by the delta and b chains.

The protein resides in the cell inner membrane. It catalyses the reaction ATP + H2O + 4 H(+)(in) = ADP + phosphate + 5 H(+)(out). In terms of biological role, produces ATP from ADP in the presence of a proton gradient across the membrane. The catalytic sites are hosted primarily by the beta subunits. The protein is ATP synthase subunit beta of Nitratidesulfovibrio vulgaris (strain ATCC 29579 / DSM 644 / CCUG 34227 / NCIMB 8303 / VKM B-1760 / Hildenborough) (Desulfovibrio vulgaris).